The chain runs to 442 residues: Proline--tRNA ligase (442 aa).

This sequence belongs to the class-II aminoacyl-tRNA synthetase family. ProS type 2 subfamily. Homodimer.

The protein resides in the cytoplasm. It carries out the reaction tRNA(Pro) + L-proline + ATP = L-prolyl-tRNA(Pro) + AMP + diphosphate. Functionally, catalyzes the attachment of proline to tRNA(Pro) in a two-step reaction: proline is first activated by ATP to form Pro-AMP and then transferred to the acceptor end of tRNA(Pro). The polypeptide is Proline--tRNA ligase (Brucella anthropi (strain ATCC 49188 / DSM 6882 / CCUG 24695 / JCM 21032 / LMG 3331 / NBRC 15819 / NCTC 12168 / Alc 37) (Ochrobactrum anthropi)).